Reading from the N-terminus, the 276-residue chain is 4-hydroxy-tetrahydrodipicolinate reductase (276 aa).

NAD(+)-binding positions include 18–23 (GASGRM) and Asp-44. Residue Arg-45 participates in NADP(+) binding. NAD(+)-binding positions include 107-109 (GTT) and 131-134 (APNM). The Proton donor/acceptor role is filled by His-164. His-165 lines the (S)-2,3,4,5-tetrahydrodipicolinate pocket. Residue Lys-168 is the Proton donor of the active site. Residue 174-175 (GT) participates in (S)-2,3,4,5-tetrahydrodipicolinate binding.

This sequence belongs to the DapB family.

It is found in the cytoplasm. It carries out the reaction (S)-2,3,4,5-tetrahydrodipicolinate + NAD(+) + H2O = (2S,4S)-4-hydroxy-2,3,4,5-tetrahydrodipicolinate + NADH + H(+). It catalyses the reaction (S)-2,3,4,5-tetrahydrodipicolinate + NADP(+) + H2O = (2S,4S)-4-hydroxy-2,3,4,5-tetrahydrodipicolinate + NADPH + H(+). The protein operates within amino-acid biosynthesis; L-lysine biosynthesis via DAP pathway; (S)-tetrahydrodipicolinate from L-aspartate: step 4/4. Functionally, catalyzes the conversion of 4-hydroxy-tetrahydrodipicolinate (HTPA) to tetrahydrodipicolinate. The protein is 4-hydroxy-tetrahydrodipicolinate reductase of Aromatoleum aromaticum (strain DSM 19018 / LMG 30748 / EbN1) (Azoarcus sp. (strain EbN1)).